Here is a 131-residue protein sequence, read N- to C-terminus: Cystatin-like cysteine protease inhibitor EPIC3 (131 aa).

The signal sequence occupies residues Met-1 to Ala-20. Asn-33 is a glycosylation site (N-linked (GlcNAc...) asparagine). The short motif at Gln-71–Gly-75 is the Secondary area of contact element.

Belongs to the cystatin family.

The protein resides in the secreted. Secreted effector that interacts with and inhibits host apoplastic pathogenesis-related papain-like cysteine proteases. Inhibition of host proteases by a pathogen extracellular protease inhibitor forms a specific type of defense-counterdefense mechanism between plants and microbial pathogens. The polypeptide is Cystatin-like cysteine protease inhibitor EPIC3 (Phytophthora infestans (Potato late blight agent)).